We begin with the raw amino-acid sequence, 1178 residues long: Phosphate system positive regulatory protein PHO81 (1178 aa).

One can recognise an SPX domain in the interval 1–169; it reads MKFGKYLEAR…QSHDKDFYLA (169 aa). The segment at 210 to 250 is disordered; it reads QSSTFTNDDDDDNNTSNNNKHNNNNNNNNNNNNNNNNNNIL. Low complexity predominate over residues 223 to 250; that stretch reads NTSNNNKHNNNNNNNNNNNNNNNNNNIL. 6 ANK repeats span residues 423-452, 458-487, 506-535, 556-586, 591-620, and 624-653; these read HSRV…LEDV, DSKT…ANAS, VQFD…KQNA, TGLC…DPNE, NKWT…RLDI, and NGHS…NLPS. One can recognise a GP-PDE domain in the interval 871 to 1178; the sequence is IINYEPYWKS…ELLFENNIDM (308 aa). Residue serine 956 is modified to Phosphoserine.

In terms of assembly, associates specifically with the PHO80-PHO85 and PCL7-PHO85 cyclin-CDK complexes, and much of this interaction is mediated through the PHO80 and PCL7 cyclin subunits. Interacts with the transcription factor PHO4. Phosphorylated by the cyclin-CDK PHO80-PHO85. Phosphorylation mediates the formation of a stable interaction with the cyclin-CDK and is required for function as an active inhibitor of the complex under phosphate starvation conditions.

It is found in the cytoplasm. Its subcellular location is the nucleus. In terms of biological role, inhibits the kinase activity of the cyclin-CDKs PHO80-PHO85 and PCL7-PHO85 under low-phosphate conditions. The protein is Phosphate system positive regulatory protein PHO81 (PHO81) of Saccharomyces cerevisiae (strain ATCC 204508 / S288c) (Baker's yeast).